A 161-amino-acid chain; its full sequence is Blue copper protein 1a (161 aa).

Positions 1 to 23 (MASSRVVLILSISMVLLSSVAIA) are cleaved as a signal peptide. The Phytocyanin domain occupies 24-124 (TDHIVGDDKG…QMKLVITVLA (101 aa)). A Cu cation-binding site is contributed by His64. Asn70 carries an N-linked (GlcNAc...) asparagine glycan. Residues Cys77 and Cys111 are joined by a disulfide bond. Cu cation contacts are provided by Cys105, His110, and Met116. Residues 141–161 (VVSSLFGVVMAIMVAIAVIFA) form a helical membrane-spanning segment.

It localises to the membrane. In Medicago truncatula (Barrel medic), this protein is Blue copper protein 1a.